The sequence spans 653 residues: Endoglin (653 aa).

An N-terminal signal peptide occupies residues 1–24 (MDRGVLPQAIALLLAVCSFGPTAG). At 25 to 581 (LAEGVQCDLQ…IVSPGLPDKG (557 aa)) the chain is on the extracellular side. An OR1, N-terminal part region spans residues 27-44 (EGVQCDLQPVDPKVTYTT). Residues 27–336 (EGVQCDLQPV…RSCGSGLQPS (310 aa)) form a required for interaction with GDF2 region. 7 cysteine pairs are disulfide-bonded: Cys-31–Cys-206, Cys-51–Cys-181, Cys-241–Cys-329, Cys-349–Cys-381, Cys-362–Cys-442, Cys-393–Cys-411, and Cys-493–Cys-549. The OR2 stretch occupies residues 45 to 198 (SQVSEGCVAH…MGHTLEWKSH (154 aa)). Residue Asn-57 is glycosylated (N-linked (GlcNAc...) asparagine). The tract at residues 199–329 (TQASVLGCHL…SVISLQDRSC (131 aa)) is OR1, C-terminal part. Residues 269 to 281 (KAWTTGEYSFKIF) form an essential for interaction with GDF2 region. Asn-306 carries an N-linked (GlcNAc...) asparagine glycan. Positions 362–512 (CSDDVMTLVL…MVDLIQNQEA (151 aa)) constitute a ZP domain. The helical transmembrane segment at 582–606 (LVLPAVLGITFGAFLIGALLTAALW) threads the bilayer. The Cytoplasmic portion of the chain corresponds to 607 to 653 (YIHSHTRHPGKREPVVAVAAPASSESSSTNHSIGSTQSTPCSTSSMA). Positions 625–634 (AAPASSESSS) are enriched in low complexity. The segment at 625-653 (AAPASSESSSTNHSIGSTQSTPCSTSSMA) is disordered. Positions 635–653 (TNHSIGSTQSTPCSTSSMA) are enriched in polar residues. Residues Ser-641 and Ser-644 each carry the phosphoserine; by TGFBR1 modification.

Homodimer; disulfide-linked. Forms a heteromeric complex with the signaling receptors for transforming growth factor-beta: TGFBR1 and/or TGFBR2. It is able to bind TGFB1 and TGFB2 with high affinity, but not TGFB3. Interacts with GDF2, forming a heterotetramer with a 2:2 stoichiometry. Interacts with ACVRL1. Can form a heteromeric complex with GDF2 and ACVRL1. Interacts with BMP10. Interacts with DYNLT4. Interacts with ARRB2.

Its subcellular location is the cell membrane. Its function is as follows. Vascular endothelium glycoprotein that plays an important role in the regulation of angiogenesis. Required for normal structure and integrity of adult vasculature. Regulates the migration of vascular endothelial cells. Required for normal extraembryonic angiogenesis and for embryonic heart development. May regulate endothelial cell shape changes in response to blood flow, which drive vascular remodeling and establishment of normal vascular morphology during angiogenesis. May play a role in the binding of endothelial cells to integrins. Acts as a TGF-beta coreceptor and is involved in the TGF-beta/BMP signaling cascade that ultimately leads to the activation of SMAD transcription factors. Required for GDF2/BMP9 signaling through SMAD1 in endothelial cells and modulates TGFB1 signaling through SMAD3. In Sus scrofa (Pig), this protein is Endoglin (ENG).